A 135-amino-acid polypeptide reads, in one-letter code: Protein Wnt-7b (135 aa).

2 disulfides stabilise this stretch: C3–C17 and C5–C12. A lipid anchor (O-palmitoleoyl serine; by PORCN) is attached at S9. The tract at residues 41–69 (VEVVRANRLRQPTFLKIKKVRSYQKPMET) is disordered linker. Cystine bridges form between C81/C112, C97/C107, and C134/C135. The N-linked (GlcNAc...) asparagine glycan is linked to N98.

The protein belongs to the Wnt family. Palmitoleoylation is required for efficient binding to frizzled receptors. Depalmitoleoylation leads to Wnt signaling pathway inhibition. As to expression, in adults, in brain and lung.

The protein localises to the secreted. Its subcellular location is the extracellular space. It localises to the extracellular matrix. Its function is as follows. Ligand for members of the frizzled family of seven transmembrane receptors that functions in the canonical Wnt/beta-catenin signaling pathway. Required for normal fusion of the chorion and the allantois during placenta development. Required for central nervous system (CNS) angiogenesis and blood-brain barrier regulation. This Xenopus laevis (African clawed frog) protein is Protein Wnt-7b (wnt7b).